Consider the following 198-residue polypeptide: dCTP deaminase (198 aa).

Residues 99 to 104 (RSSLGR), 125 to 127 (TLE), and Gln144 each bind dCTP. Residue Glu127 is the Proton donor/acceptor of the active site.

The protein belongs to the dCTP deaminase family. Homotrimer.

It catalyses the reaction dCTP + H2O + H(+) = dUTP + NH4(+). It participates in pyrimidine metabolism; dUMP biosynthesis; dUMP from dCTP (dUTP route): step 1/2. Functionally, catalyzes the deamination of dCTP to dUTP. This Rhodopirellula baltica (strain DSM 10527 / NCIMB 13988 / SH1) protein is dCTP deaminase.